A 452-amino-acid polypeptide reads, in one-letter code: Na(+)/H(+) antiporter NhaA (452 aa).

Helical transmembrane passes span 27-47 (FSGI…NSAL), 67-87 (FIGM…FFLM), 108-128 (AFPA…YTLF), 137-157 (GFGI…LLLG), 166-186 (VFLV…IAIF), 194-214 (LWLL…KMGV), 216-236 (SLFP…NCGI), 314-334 (PWSA…VAIS), 343-363 (GVLP…ILGL), 381-401 (WIDI…SIFI), and 414-434 (VAKI…YFFI).

Belongs to the NhaA Na(+)/H(+) (TC 2.A.33) antiporter family.

The protein localises to the cell inner membrane. The catalysed reaction is Na(+)(in) + 2 H(+)(out) = Na(+)(out) + 2 H(+)(in). In terms of biological role, na(+)/H(+) antiporter that extrudes sodium in exchange for external protons. The protein is Na(+)/H(+) antiporter NhaA of Wolinella succinogenes (strain ATCC 29543 / DSM 1740 / CCUG 13145 / JCM 31913 / LMG 7466 / NCTC 11488 / FDC 602W) (Vibrio succinogenes).